A 197-amino-acid polypeptide reads, in one-letter code: Adrenodoxin-like protein 1, mitochondrial (197 aa).

The N-terminal 35 residues, 1 to 35 (MIGHRISRLGSTIVKQLAREGYLATYGTKNLHRSY), are a transit peptide targeting the mitochondrion. Residues 79 to 184 (EKITIIFVDK…GVRLAIPSAT (106 aa)) enclose the 2Fe-2S ferredoxin-type domain. The [2Fe-2S] cluster site is built by Cys-118, Cys-124, Cys-127, and Cys-165.

It belongs to the adrenodoxin/putidaredoxin family. Requires [2Fe-2S] cluster as cofactor.

The protein resides in the mitochondrion matrix. Its function is as follows. Associates in vitro with the adrenodoxin reductase MFDR to form an efficient low potential electron transfer chain that is able to reduce cytochrome C. Functions as accessory mitochondrial protein involved with BIO2 in the plant biotin synthase reaction. In Arabidopsis thaliana (Mouse-ear cress), this protein is Adrenodoxin-like protein 1, mitochondrial.